The primary structure comprises 505 residues: Transcription factor APG (505 aa).

7 disordered regions span residues 1–40 (MLRG…CSAA), 61–99 (GAAN…DTAP), 119–156 (PAAA…SGGG), 169–242 (PLQQ…APTT), 256–312 (AQRL…SQDE), 324–344 (RRSA…NLSE), and 469–505 (PPPP…VKQA). Over residues 23 to 33 (PLRPPPPPPFQ) the composition is skewed to pro residues. Polar residues predominate over residues 131–144 (CSSSHGAVVPSTSA). The span at 174-199 (PSGGETASASASAAATSTVPVESTVV) shows a compositional bias: low complexity. Residues 200-212 (QAATNRLRSTPLF) show a composition bias toward polar residues. The span at 222-239 (PPKPSPRAAAPPPPPPLA) shows a compositional bias: pro residues. The span at 288-299 (GDRRQLNWRDSH) shows a compositional bias: basic and acidic residues. Over residues 300 to 310 (NNQSAEWSASQ) the composition is skewed to polar residues. The span at 324 to 334 (RRSAARSSKRS) shows a compositional bias: basic residues. The segment covering 335–344 (RTAEVHNLSE) has biased composition (basic and acidic residues). In terms of domain architecture, bHLH spans 335–384 (RTAEVHNLSERRRRDRINEKMRALQELIPNCNKIDKASMLEEAIEYLKTL). Over residues 492-505 (GAADAGNAPAVKQA) the composition is skewed to low complexity.

Belongs to the bHLH protein family. As to quaternary structure, homodimer and heterodimer with ILI5 or ILI6.

It localises to the nucleus. Its function is as follows. Atypical bHLH transcription factor that acts as a negative regulator of grain size. Binds the transcription factor ILI6 and forms a heterodimer of antagonistic bHLH transcription factors that regulates grain length and weight by controlling cell elongation in lemma and palea. May be involved in the control of lamina inclination through brassinosteroid signaling pathway. The protein is Transcription factor APG (APG) of Oryza sativa subsp. japonica (Rice).